The primary structure comprises 62 residues: UPF0434 protein azo1471 (62 aa).

This sequence belongs to the UPF0434 family.

The protein is UPF0434 protein azo1471 of Azoarcus sp. (strain BH72).